The sequence spans 282 residues: N-methyltransferase gliN (282 aa).

It belongs to the methyltransferase superfamily. LaeA methyltransferase family.

It participates in mycotoxin biosynthesis. N-methyltransferase; part of the gene cluster that mediates the biosynthesis of gliotoxin, a member of the epipolythiodioxopiperazine (ETP) class of toxins characterized by a disulfide bridged cyclic dipeptide. The first step in gliotoxin biosynthesis is the condensation of serine and phenylalanine to form the cyclo-L-phenylalanyl-L-serine diketopiperazine (DKP) by the NRPS gliP. GliP is also able to produce the DKP cyclo-L-tryptophanyl-L-serine, suggesting that the substrate specificity of the first adenylation (A) domain in gliP is sufficiently relaxed to accommodate both L-Phe and L-Trp. The cytochrome P450 monooxygenase gliC has been shown to catalyze the subsequent hydroxylation of the alpha-carbon of L-Phe in cyclo-L-phenylalanyl-L-serine whereas the second cytochrome P450 enzyme, gliF, is presumably involved in the modification of the DKP side chain. The glutathione S-transferase (GST) gliG then forms a bis-glutathionylated biosynthetic intermediate which is responsible for the sulfurization of gliotoxin. This bis-glutathionylated intermediate is subsequently processed by the gamma-glutamyl cyclotransferase gliK to remove both gamma-glutamyl moieties. Subsequent processing via gliI yields a biosynthetic intermediate, which is N-methylated via the N-methyltransferase gliN, before the gliotoxin oxidoreductase gliT-mediated disulfide bridge closure. GliN-mediated amide methylation confers stability to ETP, damping the spontaneous formation of tri- and tetrasulfides. Intracellular dithiol gliotoxin oxidized by gliT is subsequently effluxed by gliA. Gliotoxin contributes to pathogenesis during invasive aspergillosis. In macrophages and neutrophils, gliotoxin showed inhibition of various different cell functions including cytokine production, antigen presentation, phagocytosis, and production of reactive oxygen species. This Aspergillus fumigatus (strain ATCC MYA-4609 / CBS 101355 / FGSC A1100 / Af293) (Neosartorya fumigata) protein is N-methyltransferase gliN.